The primary structure comprises 167 residues: Thioredoxin Y2, chloroplastic (167 aa).

The transit peptide at 1-58 (MAISLATAYISPCFTPESSNSASPSRTLSSVRLPSQIRRFGSVQSPSSSTRFAPLTVR) directs the protein to the chloroplast. In terms of domain architecture, Thioredoxin spans 59-164 (AAKKQTFNSF…LVERIENSLQ (106 aa)). Catalysis depends on nucleophile residues Cys88 and Cys91. A disulfide bridge connects residues Cys88 and Cys91.

This sequence belongs to the thioredoxin family. Plant Y-type subfamily. As to expression, expressed in leaves.

The protein localises to the plastid. The protein resides in the chloroplast stroma. In terms of biological role, thiol-disulfide oxidoreductase that poorly activates chloroplastic malate dehydrogenase (NADP-MDH) and fructose-1,6-bisphosphatase. Provides reducing equivalents for peroxiredoxin Q. The chain is Thioredoxin Y2, chloroplastic from Arabidopsis thaliana (Mouse-ear cress).